The following is a 161-amino-acid chain: 2-C-methyl-D-erythritol 2,4-cyclodiphosphate synthase (161 aa).

The a divalent metal cation site is built by Asp-10 and His-12. 4-CDP-2-C-methyl-D-erythritol 2-phosphate contacts are provided by residues 10-12 and 36-37; these read DVH and HS. Position 44 (His-44) interacts with a divalent metal cation. 4-CDP-2-C-methyl-D-erythritol 2-phosphate is bound by residues 58-60, 63-67, 102-108, 134-137, Phe-141, and Arg-144; these read DIG, FPDTD, AQAPKMA, and TTTE.

The protein belongs to the IspF family. As to quaternary structure, homotrimer. A divalent metal cation serves as cofactor.

It catalyses the reaction 4-CDP-2-C-methyl-D-erythritol 2-phosphate = 2-C-methyl-D-erythritol 2,4-cyclic diphosphate + CMP. The protein operates within isoprenoid biosynthesis; isopentenyl diphosphate biosynthesis via DXP pathway; isopentenyl diphosphate from 1-deoxy-D-xylulose 5-phosphate: step 4/6. Involved in the biosynthesis of isopentenyl diphosphate (IPP) and dimethylallyl diphosphate (DMAPP), two major building blocks of isoprenoid compounds. Catalyzes the conversion of 4-diphosphocytidyl-2-C-methyl-D-erythritol 2-phosphate (CDP-ME2P) to 2-C-methyl-D-erythritol 2,4-cyclodiphosphate (ME-CPP) with a corresponding release of cytidine 5-monophosphate (CMP). In Shewanella sediminis (strain HAW-EB3), this protein is 2-C-methyl-D-erythritol 2,4-cyclodiphosphate synthase.